The following is a 421-amino-acid chain: Alpha-1-antitrypsin (421 aa).

The first 24 residues, 1–24 (MASSSTWGLLLLAGLCCLVPISLA), serve as a signal peptide directing secretion. 2 N-linked (GlcNAc...) asparagine glycosylation sites follow: N73 and N110. The segment at 376–395 (GATILEAIPMSIPPNVKFNK) is RCL. The residue at position 386 (S386) is a Phosphoserine.

This sequence belongs to the serpin family. In terms of assembly, interacts with CELA2A. Interacts with ERGIC3 and LMAN1/ERGIC53. Interacts with PRSS1/Trypsin.

The protein resides in the secreted. Its function is as follows. Inhibitor of serine proteases. Its primary target is elastase, but it also has a moderate affinity for plasmin and thrombin. The sequence is that of Alpha-1-antitrypsin (SERPINA1) from Sus scrofa (Pig).